We begin with the raw amino-acid sequence, 456 residues long: Esterase MT1326 (456 aa).

3 LysM domains span residues 3 to 50 (STHA…RLIM), 54 to 101 (TRYT…RLIM), and 105 to 152 (TRYT…VLVI). Catalysis depends on residues S294, D391, and H425.

The protein belongs to the AB hydrolase superfamily.

The protein resides in the secreted. Its subcellular location is the cell wall. It carries out the reaction a fatty acid ester + H2O = an aliphatic alcohol + a fatty acid + H(+). Exhibits lipolytic activity with medium chain length esters as optimum substrates. The sequence is that of Esterase MT1326 from Mycobacterium tuberculosis (strain CDC 1551 / Oshkosh).